An 864-amino-acid polypeptide reads, in one-letter code: Protein translocase subunit SecA (864 aa).

ATP contacts are provided by residues Gln87, 105-109, and Asp512; that span reads GEGKT.

This sequence belongs to the SecA family. In terms of assembly, monomer and homodimer. Part of the essential Sec protein translocation apparatus which comprises SecA, SecYEG and auxiliary proteins SecDF-YajC and YidC.

It is found in the cell inner membrane. Its subcellular location is the cytoplasm. The enzyme catalyses ATP + H2O + cellular proteinSide 1 = ADP + phosphate + cellular proteinSide 2.. Functionally, part of the Sec protein translocase complex. Interacts with the SecYEG preprotein conducting channel. Has a central role in coupling the hydrolysis of ATP to the transfer of proteins into and across the cell membrane, serving as an ATP-driven molecular motor driving the stepwise translocation of polypeptide chains across the membrane. The chain is Protein translocase subunit SecA from Buchnera aphidicola subsp. Cinara cedri (strain Cc).